A 376-amino-acid polypeptide reads, in one-letter code: Uroporphyrinogen decarboxylase (376 aa).

Substrate is bound by residues 29 to 33 (RQAGR), D79, Y155, S210, and H342.

The protein belongs to the uroporphyrinogen decarboxylase family. In terms of assembly, homodimer.

The protein localises to the cytoplasm. It carries out the reaction uroporphyrinogen III + 4 H(+) = coproporphyrinogen III + 4 CO2. It functions in the pathway porphyrin-containing compound metabolism; protoporphyrin-IX biosynthesis; coproporphyrinogen-III from 5-aminolevulinate: step 4/4. Catalyzes the decarboxylation of four acetate groups of uroporphyrinogen-III to yield coproporphyrinogen-III. The protein is Uroporphyrinogen decarboxylase of Paracidovorax citrulli (strain AAC00-1) (Acidovorax citrulli).